We begin with the raw amino-acid sequence, 438 residues long: Anthranilate synthase component 1 (438 aa).

L-tryptophan-binding positions include Ser-45 and 220 to 222 (PYL). 255–256 (GT) lines the chorismate pocket. Glu-282 contributes to the Mg(2+) binding site. Chorismate contacts are provided by residues Tyr-370, Arg-389, 405-407 (GAG), and Gly-407. Residue Glu-420 participates in Mg(2+) binding.

This sequence belongs to the anthranilate synthase component I family. In terms of assembly, heterotetramer consisting of two non-identical subunits: a beta subunit (TrpG) and a large alpha subunit (TrpE). Mg(2+) is required as a cofactor.

It carries out the reaction chorismate + L-glutamine = anthranilate + pyruvate + L-glutamate + H(+). Its pathway is amino-acid biosynthesis; L-tryptophan biosynthesis; L-tryptophan from chorismate: step 1/5. Its activity is regulated as follows. Feedback inhibited by tryptophan. In terms of biological role, part of a heterotetrameric complex that catalyzes the two-step biosynthesis of anthranilate, an intermediate in the biosynthesis of L-tryptophan. In the first step, the glutamine-binding beta subunit (TrpG) of anthranilate synthase (AS) provides the glutamine amidotransferase activity which generates ammonia as a substrate that, along with chorismate, is used in the second step, catalyzed by the large alpha subunit of AS (TrpE) to produce anthranilate. In the absence of TrpG, TrpE can synthesize anthranilate directly from chorismate and high concentrations of ammonia. This chain is Anthranilate synthase component 1 (trpE), found in Aeropyrum pernix (strain ATCC 700893 / DSM 11879 / JCM 9820 / NBRC 100138 / K1).